Here is a 272-residue protein sequence, read N- to C-terminus: 4-hydroxy-tetrahydrodipicolinate reductase (272 aa).

Residue 12-17 (GALGKM) participates in NAD(+) binding. K39 provides a ligand contact to NADP(+). NAD(+)-binding positions include 102–104 (GTT) and 126–129 (SSNY). The Proton donor/acceptor role is filled by H159. (S)-2,3,4,5-tetrahydrodipicolinate is bound at residue H160. The active-site Proton donor is the K163. 169 to 170 (GT) serves as a coordination point for (S)-2,3,4,5-tetrahydrodipicolinate.

The protein belongs to the DapB family. As to quaternary structure, homotetramer.

Its subcellular location is the cytoplasm. The enzyme catalyses (S)-2,3,4,5-tetrahydrodipicolinate + NAD(+) + H2O = (2S,4S)-4-hydroxy-2,3,4,5-tetrahydrodipicolinate + NADH + H(+). It carries out the reaction (S)-2,3,4,5-tetrahydrodipicolinate + NADP(+) + H2O = (2S,4S)-4-hydroxy-2,3,4,5-tetrahydrodipicolinate + NADPH + H(+). It functions in the pathway amino-acid biosynthesis; L-lysine biosynthesis via DAP pathway; (S)-tetrahydrodipicolinate from L-aspartate: step 4/4. Functionally, catalyzes the conversion of 4-hydroxy-tetrahydrodipicolinate (HTPA) to tetrahydrodipicolinate. This Buchnera aphidicola subsp. Baizongia pistaciae (strain Bp) protein is 4-hydroxy-tetrahydrodipicolinate reductase.